The primary structure comprises 140 residues: Large ribosomal subunit protein uL14 (140 aa).

This sequence belongs to the universal ribosomal protein uL14 family.

This chain is Large ribosomal subunit protein uL14 (rpl-23), found in Caenorhabditis elegans.